The sequence spans 163 residues: UPF0303 protein SAV_5210 (163 aa).

The protein belongs to the UPF0303 family.

This Streptomyces avermitilis (strain ATCC 31267 / DSM 46492 / JCM 5070 / NBRC 14893 / NCIMB 12804 / NRRL 8165 / MA-4680) protein is UPF0303 protein SAV_5210.